The chain runs to 623 residues: Peptide transporter PTR2 (623 aa).

Disordered stretches follow at residues 1–20 and 31–58; these read MVSSDFENEKQPDVVQVLTD and DYEDPKNYSTNYVDDYNPKGLRRPTPQE. 11 consecutive transmembrane segments (helical) span residues 134–154, 163–183, 191–211, 250–270, 277–297, 385–405, 418–438, 448–468, 499–519, 529–549, and 557–577; these read ALTNLLTFLAYVFPLIGGYLG, AIQWGVFFGFVAHLFFIFASI, NAGLGLCVIAIITLSAGSGLM, ITNVFYLAINIGAFLQIATSY, FWLAFFVPMILYIIVPIFLFI, IIFNLADSGLGSVETSLIGAM, FNPLTIIILIPILEYGLYPLL, IWRICFGFVVCSFSQIAGFVL, LFILAAAGECWAYTTAYELAY, LVYALFLVMSAFSAALSLAIT, and LHWVFLAIGLAGFLCAIVMLA.

Belongs to the major facilitator superfamily. Proton-dependent oligopeptide transporter (POT/PTR) (TC 2.A.17) family.

It localises to the membrane. In terms of biological role, uptake of small peptides. The polypeptide is Peptide transporter PTR2 (PTR2) (Candida albicans (Yeast)).